A 187-amino-acid chain; its full sequence is High affinity copper uptake protein 1 (187 aa).

At 1 to 65 (MRMNHMEMHH…SSLVINTPGE (65 aa)) the chain is on the extracellular side. A Bis-His motif motif is present at residues 9–10 (HH). N19 is a glycosylation site (N-linked (GlcNAc...) asparagine). T30 is a glycosylation site (O-linked (GalNAc...) threonine). Residues 66–86 (MAGAFVAVFLLAMFYEGLKIA) traverse the membrane as a helical segment. Topologically, residues 87 to 129 (REGLLRKSQVSIRYNSMPVPGPNGTILMETHKTVGQQMLSFPH) are cytoplasmic. Position 111 is a phosphothreonine (T111). Residues 130-150 (LLQTVLHIIQVVISYFLMLIF) form a helical membrane-spanning segment. Over 151 to 153 (MTY) the chain is Extracellular. The chain crosses the membrane as a helical span at residues 154–174 (NGYLCIAVAAGAGTGYFLFSW). At 175-187 (KKAVVVDITEHCH) the chain is on the cytoplasmic side. C186 bears the Cysteine sulfenic acid (-SOH) mark.

This sequence belongs to the copper transporter (Ctr) (TC 1.A.56) family. SLC31A subfamily. Homotrimer; is stabilized by cisplatin via interactions between cisplatin and the methionine-rich clusters, and could be crucial for the copper(2+) reduction process and copper(1+) stabilization. Heterotrimer between SLC31A1, CCS and SOD1; this heterotrimer is copper(1+)-mediated and its maintenance is regulated through SOD1 activation. Interacts with KDR; this interaction is induced upon VEGFA stimulation leading to SLC31A1 and KDR subsequent co-internalization to early endosomes, thereby activating KDR downstream signaling in endothelial cells. Interacts (via C-terminal domain) with ATOX1 (via dimer form); this interaction improves ATOX1 stability and controls intracellular copper(1+) levels. Interacts with SLC31A2; this interaction stabilizes SLC31A2 and protects its from ubiquitination and degradation. Interacts (via C-terminal domain) with CCS; this interaction is copper(1+)-mediated. Post-translationally, O-Glycosylation at Thr-30 protects from proteolytic cleavage in the N-terminal extracellular domain. In terms of processing, proteolytic cleavage, leading to a truncated form, is facilitated by SLC31A2 and initiated preferentially by CTSL and to a minor extend by CTSB in endolysosomal compartments. A post-CTSL/cathepsin L processing occurs to yield to the fully truncated form. Sulfenylated at Cys-186 after stimulation with VEGFA, which induces SLC31A1-KDR disulfide bond formation and their co-internalization to early endosomes, driving to a sustained VEGFR2 signaling.

It localises to the cell membrane. Its subcellular location is the early endosome membrane. It is found in the recycling endosome membrane. The protein resides in the apical cell membrane. The protein localises to the late endosome membrane. It localises to the basolateral cell membrane. The catalysed reaction is Cu(+)(out) = Cu(+)(in). The enzyme catalyses Ag(+)(out) = Ag(+)(in). With respect to regulation, copper uptake is inhibited by cold temperature, silver and zinc ions. Platinum-containing chemotherapeutic agents uptake is inhibited by cold temperature and copper. Uniporter that mediates the transport of copper(1+) from the extracellular space to the cytoplasm, across the plasma membrane. Then, delivers directly copper(1+) to specific chaperone such as ATOX1, via a copper(1+)- mediated transient interaction between the C-terminal domain and a copper(1+) chaperone, thus controlling intracellular copper(1+) levels. May function in copper(1+) import from the apical membrane thus may drive intestinal copper absorption. The copper(1+) transport mechanism is sodium-independent, saturable and of high-affinity. Also mediates the uptake of silver(1+). May function in the influx of the platinum-containing chemotherapeutic agents. The platinum-containing chemotherapeutic agents uptake is saturable. Also participates in the first step of copper(2+) acquisition by cells through a direct transfer of copper(2+) from copper(2+) carriers in blood, such as ALB to the N-terminal domain of SLC31A1, leading to copper(2+) reduction and probably followed by copper(1+) stabilization. In addition, functions as a redox sensor to promote angiogenesis in endothelial cells, in a copper(1+) transport independent manner, by transmitting the VEGF-induced ROS signal through a sulfenylation at Cys-189 leading to a subsequent disulfide bond formation between SLC31A1 and KDR. The SLC31A1-KDR complex is then co-internalized to early endosomes, driving a sustained VEGFR2 signaling. In terms of biological role, mobilizes copper(1+) out of the endosomal compartment, making copper(1+) available for export out of the cells. This Rattus norvegicus (Rat) protein is High affinity copper uptake protein 1.